A 122-amino-acid chain; its full sequence is Large ribosomal subunit protein uL14 (122 aa).

This sequence belongs to the universal ribosomal protein uL14 family. Part of the 50S ribosomal subunit. Forms a cluster with proteins L3 and L19. In the 70S ribosome, L14 and L19 interact and together make contacts with the 16S rRNA in bridges B5 and B8.

Its function is as follows. Binds to 23S rRNA. Forms part of two intersubunit bridges in the 70S ribosome. In Janthinobacterium sp. (strain Marseille) (Minibacterium massiliensis), this protein is Large ribosomal subunit protein uL14.